We begin with the raw amino-acid sequence, 92 residues long: Small ribosomal subunit protein uS19c (92 aa).

The protein belongs to the universal ribosomal protein uS19 family.

It is found in the plastid. Its subcellular location is the chloroplast. In terms of biological role, protein S19 forms a complex with S13 that binds strongly to the 16S ribosomal RNA. This Dioscorea elephantipes (Elephant's foot yam) protein is Small ribosomal subunit protein uS19c.